Here is a 332-residue protein sequence, read N- to C-terminus: 4-hydroxythreonine-4-phosphate dehydrogenase (332 aa).

The substrate site is built by histidine 136 and threonine 137. The a divalent metal cation site is built by histidine 166, histidine 211, and histidine 266. 3 residues coordinate substrate: lysine 274, asparagine 283, and arginine 292.

Belongs to the PdxA family. Homodimer. Zn(2+) is required as a cofactor. The cofactor is Mg(2+). Co(2+) serves as cofactor.

It is found in the cytoplasm. The enzyme catalyses 4-(phosphooxy)-L-threonine + NAD(+) = 3-amino-2-oxopropyl phosphate + CO2 + NADH. It functions in the pathway cofactor biosynthesis; pyridoxine 5'-phosphate biosynthesis; pyridoxine 5'-phosphate from D-erythrose 4-phosphate: step 4/5. Its function is as follows. Catalyzes the NAD(P)-dependent oxidation of 4-(phosphooxy)-L-threonine (HTP) into 2-amino-3-oxo-4-(phosphooxy)butyric acid which spontaneously decarboxylates to form 3-amino-2-oxopropyl phosphate (AHAP). This is 4-hydroxythreonine-4-phosphate dehydrogenase from Wigglesworthia glossinidia brevipalpis.